A 175-amino-acid polypeptide reads, in one-letter code: Co-chaperone protein HscB homolog (175 aa).

One can recognise a J domain in the interval 8–80 (DFFSLFGLPR…LNRARYLLQL (73 aa)).

Belongs to the HscB family. Interacts with HscA and stimulates its ATPase activity.

Co-chaperone involved in the maturation of iron-sulfur cluster-containing proteins. Seems to help targeting proteins to be folded toward HscA. This Chromobacterium violaceum (strain ATCC 12472 / DSM 30191 / JCM 1249 / CCUG 213 / NBRC 12614 / NCIMB 9131 / NCTC 9757 / MK) protein is Co-chaperone protein HscB homolog.